A 321-amino-acid chain; its full sequence is Phospholipid phosphatase-related protein type 5 (321 aa).

Transmembrane regions (helical) follow at residues 6 to 26 (VALISSMLYFQMVIMAGTVML), 62 to 82 (AVPPVLLYSLAAGVPVLVIIV), 122 to 142 (FLGIYAFGLFATDIFVNAGQV), 196 to 213 (AALSVYAATYLTMYITST), 225 to 245 (VLCLGLMCLAFLTGLNRVAEY), and 252 to 272 (VIAGFLVGISIAVFLVVCVVN).

It belongs to the PA-phosphatase related phosphoesterase family.

The protein resides in the cell membrane. Induces filopodia formation and promotes neurite growth in a CDC42-independent manner; impedes neurite growth inhibitory-mediated axonal retraction. The sequence is that of Phospholipid phosphatase-related protein type 5 from Mus musculus (Mouse).